The following is a 400-amino-acid chain: Na(+)/H(+) antiporter NhaA (400 aa).

A run of 11 helical transmembrane segments spans residues 10-30 (FNLE…AMII), 60-80 (AHHW…GLEL), 95-115 (IILP…VYLF), 126-146 (GWAI…SLLG), 155-175 (VFLV…IALF), 178-198 (NDLS…LYML), 218-238 (IAVL…ALFI), 265-285 (GILP…AGFG), 295-315 (IAAG…WLIF), 334-354 (AALL…LAFA), and 364-384 (LGII…LKTT).

It belongs to the NhaA Na(+)/H(+) (TC 2.A.33) antiporter family.

It localises to the cell inner membrane. It catalyses the reaction Na(+)(in) + 2 H(+)(out) = Na(+)(out) + 2 H(+)(in). In terms of biological role, na(+)/H(+) antiporter that extrudes sodium in exchange for external protons. The sequence is that of Na(+)/H(+) antiporter NhaA from Psychrobacter arcticus (strain DSM 17307 / VKM B-2377 / 273-4).